The following is a 225-amino-acid chain: 7-cyano-7-deazaguanine synthase (225 aa).

10-20 (LSGGIDSATAA) is an ATP binding site. 4 residues coordinate Zn(2+): C191, C199, C202, and C205.

The protein belongs to the QueC family. The cofactor is Zn(2+).

It catalyses the reaction 7-carboxy-7-deazaguanine + NH4(+) + ATP = 7-cyano-7-deazaguanine + ADP + phosphate + H2O + H(+). Its pathway is purine metabolism; 7-cyano-7-deazaguanine biosynthesis. Functionally, catalyzes the ATP-dependent conversion of 7-carboxy-7-deazaguanine (CDG) to 7-cyano-7-deazaguanine (preQ(0)). This Prochlorococcus marinus (strain NATL2A) protein is 7-cyano-7-deazaguanine synthase.